The primary structure comprises 414 residues: Light-independent protochlorophyllide reductase subunit N (414 aa).

[4Fe-4S] cluster is bound by residues Cys-16, Cys-41, and Cys-98.

Belongs to the BchN/ChlN family. Protochlorophyllide reductase is composed of three subunits; BchL, BchN and BchB. Forms a heterotetramer of two BchB and two BchN subunits. [4Fe-4S] cluster serves as cofactor.

It carries out the reaction chlorophyllide a + oxidized 2[4Fe-4S]-[ferredoxin] + 2 ADP + 2 phosphate = protochlorophyllide a + reduced 2[4Fe-4S]-[ferredoxin] + 2 ATP + 2 H2O. It functions in the pathway porphyrin-containing compound metabolism; bacteriochlorophyll biosynthesis (light-independent). Its function is as follows. Component of the dark-operative protochlorophyllide reductase (DPOR) that uses Mg-ATP and reduced ferredoxin to reduce ring D of protochlorophyllide (Pchlide) to form chlorophyllide a (Chlide). This reaction is light-independent. The NB-protein (BchN-BchB) is the catalytic component of the complex. The polypeptide is Light-independent protochlorophyllide reductase subunit N (Roseiflexus castenholzii (strain DSM 13941 / HLO8)).